The following is a 700-amino-acid chain: Elongation factor G (700 aa).

Positions 10–286 constitute a tr-type G domain; sequence NKVRNIGIMA…AVIDYLPNPL (277 aa). GTP contacts are provided by residues 19–26, 83–87, and 137–140; these read AHIDAGKT, DTPGH, and NKMD.

Belongs to the TRAFAC class translation factor GTPase superfamily. Classic translation factor GTPase family. EF-G/EF-2 subfamily.

The protein resides in the cytoplasm. In terms of biological role, catalyzes the GTP-dependent ribosomal translocation step during translation elongation. During this step, the ribosome changes from the pre-translocational (PRE) to the post-translocational (POST) state as the newly formed A-site-bound peptidyl-tRNA and P-site-bound deacylated tRNA move to the P and E sites, respectively. Catalyzes the coordinated movement of the two tRNA molecules, the mRNA and conformational changes in the ribosome. The sequence is that of Elongation factor G from Rhodococcus jostii (strain RHA1).